We begin with the raw amino-acid sequence, 511 residues long: Colicin-B (511 aa).

The TonB box motif lies at 17–24; sequence DTMVVWPS. The next 2 helical transmembrane spans lie at 455–475 and 477–497; these read MASA…LIAF and LSAT…GAFI.

The protein belongs to the channel forming colicin family.

Its subcellular location is the cell membrane. Functionally, this colicin is a channel-forming colicin. This class of transmembrane toxins depolarize the cytoplasmic membrane, leading to dissipation of cellular energy. Its function is as follows. Colicins are polypeptide toxins produced by and active against E.coli and closely related bacteria. The chain is Colicin-B (cba) from Escherichia coli.